Consider the following 363-residue polypeptide: Probable dual-specificity RNA methyltransferase RlmN (363 aa).

The Proton acceptor role is filled by Glu106. The region spanning 112–345 (HEYGNSVCVT…VTIRREQGHD (234 aa)) is the Radical SAM core domain. Cysteines 119 and 350 form a disulfide. The [4Fe-4S] cluster site is built by Cys126, Cys130, and Cys133. S-adenosyl-L-methionine is bound by residues 176 to 177 (GE), Ser208, 231 to 233 (SLH), and Asn307. Cys350 functions as the S-methylcysteine intermediate in the catalytic mechanism.

The protein belongs to the radical SAM superfamily. RlmN family. The cofactor is [4Fe-4S] cluster.

The protein resides in the cytoplasm. It carries out the reaction adenosine(2503) in 23S rRNA + 2 reduced [2Fe-2S]-[ferredoxin] + 2 S-adenosyl-L-methionine = 2-methyladenosine(2503) in 23S rRNA + 5'-deoxyadenosine + L-methionine + 2 oxidized [2Fe-2S]-[ferredoxin] + S-adenosyl-L-homocysteine. The enzyme catalyses adenosine(37) in tRNA + 2 reduced [2Fe-2S]-[ferredoxin] + 2 S-adenosyl-L-methionine = 2-methyladenosine(37) in tRNA + 5'-deoxyadenosine + L-methionine + 2 oxidized [2Fe-2S]-[ferredoxin] + S-adenosyl-L-homocysteine. Its function is as follows. Specifically methylates position 2 of adenine 2503 in 23S rRNA and position 2 of adenine 37 in tRNAs. This is Probable dual-specificity RNA methyltransferase RlmN from Bacillus subtilis (strain 168).